The primary structure comprises 431 residues: Keratin, type I cytoskeletal 18 (431 aa).

The tract at residues 2–83 (SLRTSYSVRS…SGSTGEIMGN (82 aa)) is head. Position 12 is a phosphoserine (serine 12). Threonine 13 is modified (phosphothreonine). Residues serine 22 and serine 36 each carry the phosphoserine modification. Residues 84–119 (EKMAMQNLNDRLASYLEKVRILEQANSKLELKIREA) form a coil 1A region. An IF rod domain is found at 84–395 (EKMAMQNLND…RLLDGGDFKL (312 aa)). Positions 120 to 136 (LEKRGPDVHDYSRFQPI) are linker 1. Positions 137 to 228 (VDELRKKIFD…KNHDNEVMEL (92 aa)) are coil 1B. Positions 229 to 252 (RNQISQSGVQVDVDAPKGQDLSQI) are linker 12. Residues 253 to 390 (MEEIRAKYEK…IATYRRLLDG (138 aa)) form a coil 2 region. The tract at residues 391 to 431 (GDFKLQDALEEQKKVKVMTVTQTLVDGKVVSSSTETKERKL) is tail.

This sequence belongs to the intermediate filament family. Heterotetramer of two type I and two type II keratins. Keratin-18 associates with keratin-8. Proteolytically cleaved by caspases during epithelial cell apoptosis. As to expression, expressed in simple epithelia such as intestinal mucosa, bile duct, hepatocytes, renal tubules, endothelia, ocular lens epithelium, and in a variety of mesenchymally-derived cells such as blood vessel endothelia, pillar gill cells, optic nerve glial cells, fibroblasts, interstitial cells, chondrocytes and ovarian theca cells. Also expressed in epidermis, pharyngeal mucosa, mucosa of anterior esophagus, gill mucosa and cornea.

In terms of biological role, when phosphorylated, plays a role in filament reorganization. This chain is Keratin, type I cytoskeletal 18, found in Danio rerio (Zebrafish).